Consider the following 497-residue polypeptide: Homeotic protein empty spiracles (497 aa).

Disordered stretches follow at residues 34-117 (NDVS…HLSP), 161-262 (SPLQ…MMMP), and 441-497 (NRRT…DASH). The span at 35-50 (DVSTAGGNSTPDLSGP) shows a compositional bias: polar residues. Pro residues predominate over residues 51–68 (QSPPPGERNVPGSPPQTP). The segment covering 96 to 117 (PHAQQQQQQHLQAPHPHPHLSP) has biased composition (low complexity). Residues 161 to 176 (SPLQTRLSPETEQPQM) are compositionally biased toward polar residues. Low complexity-rich tracts occupy residues 208-239 (PKSV…QQQQ) and 248-262 (PAMM…MMMP). The homeobox DNA-binding region spans 391 to 450 (PKRIRTAFSPSQLLKLEHAFESNQYVVGAERKALAQNLNLSETQVKVWFQNRRTKHKRMQ). Acidic residues predominate over residues 470-497 (GDEDDDELIDMEMDECPSDEEHELDASH).

Belongs to the EMX homeobox family.

Its subcellular location is the nucleus. Acts as a homeotic selector gene controlling antennal and mandibular segment identity. The sequence is that of Homeotic protein empty spiracles (ems) from Drosophila melanogaster (Fruit fly).